Reading from the N-terminus, the 536-residue chain is Signal peptide peptidase-like 5 (536 aa).

An N-terminal signal peptide occupies residues 1–29; sequence MSLPPFTCRLLAAAAALYLIGLLCVGADT. Over 30-186 the chain is Lumenal; sequence KDVTAPKIPG…VELLLYAPKS (157 aa). The region spanning 94-170 is the PA domain; it reads SNLTSKLSWS…TSSGDALKKS (77 aa). Residues N95 and N151 are each glycosylated (N-linked (GlcNAc...) asparagine). Residues 187 to 207 form a helical membrane-spanning segment; it reads PIVDYAVVFLWLMSVGTVFVA. Topologically, residues 208–243 are cytoplasmic; the sequence is SVWSHVTSPKKNDEQYDELSPKKSSNVDATKGGAEE. The tract at residues 218-238 is disordered; the sequence is KNDEQYDELSPKKSSNVDATK. A helical transmembrane segment spans residues 244–264; it reads ETLDISAMGAVIFVISASTFL. Over 265 to 273 the chain is Lumenal; it reads VLLFFFMSS. The chain crosses the membrane as a helical span at residues 274 to 296; that stretch reads WFILILTIFFVIGGMQGMHNINV. Topologically, residues 297–318 are cytoplasmic; the sequence is TLITRRCSKCGQKNLKLPLLGN. The helical transmembrane segment at 319-339 threads the bilayer; it reads TSILSLVVLLFCFVVAILWFM. The Lumenal segment spans residues 340–344; the sequence is NRKTS. Residues 345 to 365 traverse the membrane as a helical segment; it reads HAWAGQDIFGICMMINVLQVA. Residues 366–374 are Cytoplasmic-facing; sequence RLPNIRVAT. The chain crosses the membrane as a helical span at residues 375–395; the sequence is ILLCCAFFYDIFWVFISPLIF. D384 is an active-site residue. At 396–428 the chain is on the lumenal side; it reads KQSVMIAVARGSKDTGESIPMLLRIPRLSDPWG. A helical membrane pass occupies residues 429–449; that stretch reads GYNMIGFGDILFPGLLICFIF. D437 is a catalytic residue. Residues 450-463 lie on the Cytoplasmic side of the membrane; it reads RFDKENNKGVSNGY. A helical transmembrane segment spans residues 464-484; the sequence is FPWLMFGYGLGLFLTYLGLYV. The Lumenal segment spans residues 485–489; the sequence is MNGHG. Residues 490–510 traverse the membrane as a helical segment; that stretch reads QPALLYLVPCTLGITVILGLV. Residues 491–493 carry the PAL motif; the sequence is PAL. Topologically, residues 511–536 are cytoplasmic; sequence RKELRDLWNYGTQQPSAADVNPSPEA.

Belongs to the peptidase A22B family. Glycosylated.

The protein resides in the endosome membrane. Its function is as follows. Intramembrane-cleaving aspartic protease (I-CLiP) that cleaves type II membrane signal peptides in the hydrophobic plane of the membrane. The protein is Signal peptide peptidase-like 5 (SPPL5) of Arabidopsis thaliana (Mouse-ear cress).